Consider the following 157-residue polypeptide: Transcriptional repressor NrdR (157 aa).

A zinc finger spans residues 3-34 (CPFCRHPDSRVIDSRTSDDGLSIRRRRQCPEC). The ATP-cone domain maps to 46–136 (LSVIKRSGVV…VYQAFDSLED (91 aa)).

This sequence belongs to the NrdR family. Zn(2+) serves as cofactor.

Negatively regulates transcription of bacterial ribonucleotide reductase nrd genes and operons by binding to NrdR-boxes. This Leifsonia xyli subsp. xyli (strain CTCB07) protein is Transcriptional repressor NrdR.